A 430-amino-acid polypeptide reads, in one-letter code: Phosphoserine aminotransferase 1, chloroplastic (430 aa).

The transit peptide at 1-51 directs the protein to the chloroplast; the sequence is MAATTNSFLVGSNNTQIPALKPKSSSQSFLHLSKPNTVNFVSKTKPVAVRC. Val52 carries the post-translational modification N-acetylvaline. L-glutamate is bound at residue Arg111. Pyridoxal 5'-phosphate contacts are provided by residues 145–146, Trp171, Thr221, Asp241, and Gln264; that span reads AT. Lys265 carries the post-translational modification N6-(pyridoxal phosphate)lysine. 306–307 is a pyridoxal 5'-phosphate binding site; that stretch reads NT.

It belongs to the class-V pyridoxal-phosphate-dependent aminotransferase family. SerC subfamily. As to quaternary structure, homodimer. Requires pyridoxal 5'-phosphate as cofactor. In terms of tissue distribution, ubiquitous, but expressed preferentially in light-grown roots and shoots. Detected in root meristems and in root tissues surrounding the vascular bundle.

It is found in the plastid. The protein localises to the chloroplast. It carries out the reaction O-phospho-L-serine + 2-oxoglutarate = 3-phosphooxypyruvate + L-glutamate. It catalyses the reaction 4-(phosphooxy)-L-threonine + 2-oxoglutarate = (R)-3-hydroxy-2-oxo-4-phosphooxybutanoate + L-glutamate. The protein operates within amino-acid biosynthesis; L-serine biosynthesis; L-serine from 3-phospho-D-glycerate: step 2/3. Its pathway is cofactor biosynthesis; pyridoxine 5'-phosphate biosynthesis; pyridoxine 5'-phosphate from D-erythrose 4-phosphate: step 3/5. With respect to regulation, inhibited by high concentration of cysteine and by 3-phosphonooxypyruvate. Not inhibited by serine, threonine, valine, glycine, tryptophan and O-acetyl-L-serine. Its function is as follows. Involved in the plastidial phosphorylated pathway of serine biosynthesis (PPSB). Catalyzes the reversible conversion of 3-phosphohydroxypyruvate to phosphoserine. The chain is Phosphoserine aminotransferase 1, chloroplastic from Arabidopsis thaliana (Mouse-ear cress).